We begin with the raw amino-acid sequence, 517 residues long: GMP synthase [glutamine-hydrolyzing] (517 aa).

The 191-residue stretch at 9–199 (RILILDFGSQ…VLGVCGCERL (191 aa)) folds into the Glutamine amidotransferase type-1 domain. Cys-86 serves as the catalytic Nucleophile. Active-site residues include His-173 and Glu-175. The 193-residue stretch at 200–392 (WTSESIIEDA…LGLPYEMLYR (193 aa)) folds into the GMPS ATP-PPase domain. 227 to 233 (SGGVDSS) contacts ATP.

Homodimer.

The catalysed reaction is XMP + L-glutamine + ATP + H2O = GMP + L-glutamate + AMP + diphosphate + 2 H(+). Its pathway is purine metabolism; GMP biosynthesis; GMP from XMP (L-Gln route): step 1/1. Its function is as follows. Catalyzes the synthesis of GMP from XMP. The chain is GMP synthase [glutamine-hydrolyzing] from Vibrio vulnificus (strain YJ016).